Reading from the N-terminus, the 112-residue chain is Putative pterin-4-alpha-carbinolamine dehydratase (112 aa).

Residues 1 to 30 are disordered; the sequence is MSDELQSRTCTPCRGDVPPMTKAEAKRQLA.

This sequence belongs to the pterin-4-alpha-carbinolamine dehydratase family.

It catalyses the reaction (4aS,6R)-4a-hydroxy-L-erythro-5,6,7,8-tetrahydrobiopterin = (6R)-L-erythro-6,7-dihydrobiopterin + H2O. The polypeptide is Putative pterin-4-alpha-carbinolamine dehydratase (Aromatoleum aromaticum (strain DSM 19018 / LMG 30748 / EbN1) (Azoarcus sp. (strain EbN1))).